We begin with the raw amino-acid sequence, 283 residues long: 2-dehydro-3-deoxyphosphooctonate aldolase (283 aa).

Belongs to the KdsA family.

The protein resides in the cytoplasm. The enzyme catalyses D-arabinose 5-phosphate + phosphoenolpyruvate + H2O = 3-deoxy-alpha-D-manno-2-octulosonate-8-phosphate + phosphate. The protein operates within carbohydrate biosynthesis; 3-deoxy-D-manno-octulosonate biosynthesis; 3-deoxy-D-manno-octulosonate from D-ribulose 5-phosphate: step 2/3. It functions in the pathway bacterial outer membrane biogenesis; lipopolysaccharide biosynthesis. This chain is 2-dehydro-3-deoxyphosphooctonate aldolase, found in Laribacter hongkongensis (strain HLHK9).